A 28-amino-acid polypeptide reads, in one-letter code: Short cationic peptide-1a (28 aa).

Glu-28 is subject to Glutamic acid 1-amide.

As to expression, expressed by the venom gland.

It localises to the secreted. This chain is Short cationic peptide-1a, found in Cupiennius salei (American wandering spider).